Reading from the N-terminus, the 495-residue chain is L-arabinose isomerase (495 aa).

Mn(2+) is bound by residues E305, E332, H349, and H448.

It belongs to the arabinose isomerase family. Mn(2+) is required as a cofactor.

The catalysed reaction is beta-L-arabinopyranose = L-ribulose. It participates in carbohydrate degradation; L-arabinose degradation via L-ribulose; D-xylulose 5-phosphate from L-arabinose (bacterial route): step 1/3. Functionally, catalyzes the conversion of L-arabinose to L-ribulose. This Mannheimia succiniciproducens (strain KCTC 0769BP / MBEL55E) protein is L-arabinose isomerase.